The chain runs to 276 residues: RRP15-like protein (276 aa).

2 disordered regions span residues methionine 1–valine 132 and lysine 201–glutamate 276. 2 stretches are compositionally biased toward basic and acidic residues: residues phenylalanine 75–valine 95 and lysine 226–threonine 245. The span at glutamate 254–glutamate 276 shows a compositional bias: acidic residues. Serine 269 is modified (phosphoserine). Tyrosine 271 bears the Phosphotyrosine mark.

The protein belongs to the RRP15 family.

This Drosophila melanogaster (Fruit fly) protein is RRP15-like protein.